A 333-amino-acid polypeptide reads, in one-letter code: Glycerol-3-phosphate dehydrogenase [NAD(P)+] (333 aa).

NADPH is bound by residues Tyr-14, His-34, and Lys-108. Sn-glycerol 3-phosphate-binding residues include Lys-108, Gly-137, and Thr-139. Ala-141 contacts NADPH. Residues Lys-193, Asp-247, Ser-257, Arg-258, and Asn-259 each contribute to the sn-glycerol 3-phosphate site. The active-site Proton acceptor is the Lys-193. Arg-258 contacts NADPH. NADPH-binding residues include Leu-282 and Glu-284.

This sequence belongs to the NAD-dependent glycerol-3-phosphate dehydrogenase family.

Its subcellular location is the cytoplasm. It catalyses the reaction sn-glycerol 3-phosphate + NAD(+) = dihydroxyacetone phosphate + NADH + H(+). It carries out the reaction sn-glycerol 3-phosphate + NADP(+) = dihydroxyacetone phosphate + NADPH + H(+). It participates in membrane lipid metabolism; glycerophospholipid metabolism. Its function is as follows. Catalyzes the reduction of the glycolytic intermediate dihydroxyacetone phosphate (DHAP) to sn-glycerol 3-phosphate (G3P), the key precursor for phospholipid synthesis. The sequence is that of Glycerol-3-phosphate dehydrogenase [NAD(P)+] from Blochmanniella floridana.